Consider the following 910-residue polypeptide: Leucine--tRNA ligase (910 aa).

The short motif at 50 to 60 (PYTNGSLHVGH) is the 'HIGH' region element. The 'KMSKS' region motif lies at 611–615 (KISKS). Lys-614 is an ATP binding site.

It belongs to the class-I aminoacyl-tRNA synthetase family.

The protein localises to the cytoplasm. It carries out the reaction tRNA(Leu) + L-leucine + ATP = L-leucyl-tRNA(Leu) + AMP + diphosphate. The protein is Leucine--tRNA ligase of Thermoplasma volcanium (strain ATCC 51530 / DSM 4299 / JCM 9571 / NBRC 15438 / GSS1).